We begin with the raw amino-acid sequence, 350 residues long: Biotin synthase (350 aa).

In terms of domain architecture, Radical SAM core spans 41 to 268 (NEVQISRLLS…KSRVRLSAGR (228 aa)). [4Fe-4S] cluster contacts are provided by cysteine 56, cysteine 60, and cysteine 63. 4 residues coordinate [2Fe-2S] cluster: cysteine 100, cysteine 131, cysteine 191, and arginine 263.

Belongs to the radical SAM superfamily. Biotin synthase family. Homodimer. It depends on [4Fe-4S] cluster as a cofactor. Requires [2Fe-2S] cluster as cofactor.

It catalyses the reaction (4R,5S)-dethiobiotin + (sulfur carrier)-SH + 2 reduced [2Fe-2S]-[ferredoxin] + 2 S-adenosyl-L-methionine = (sulfur carrier)-H + biotin + 2 5'-deoxyadenosine + 2 L-methionine + 2 oxidized [2Fe-2S]-[ferredoxin]. The protein operates within cofactor biosynthesis; biotin biosynthesis; biotin from 7,8-diaminononanoate: step 2/2. Functionally, catalyzes the conversion of dethiobiotin (DTB) to biotin by the insertion of a sulfur atom into dethiobiotin via a radical-based mechanism. The sequence is that of Biotin synthase from Shewanella halifaxensis (strain HAW-EB4).